Reading from the N-terminus, the 375-residue chain is MAKRDYYEILGVSKSATPEEIKAAFRKLAKEHHPDRNKSADDTLFKEINEAYEVLSDSKKRAQYDQFGHDGPQGFSSASGFSGFSGGFGGVDFDINDIFGSFFNNASSSHNSSNQYETYDIHLRLHLDFMEAVNGISKNINYDRKITCHKCQGTGAKDPKDVKICTKCHGRGTSIENVHSLFGTIQQEVECHECEGTGKVASSKCEQCYGKKVINERVNLTVEIPAGTREGEKLLVSKKGNIVNNQEFDLYLHISVKPSKYFALDGLDIYSETYIDPIKAIVGGIIEVVTINGIKTIEIPSNTPEGKKFRISGSGIVNKKSNIFGKKNGDFYTTIRYAKPVELSKDEIAYLKNISTRTNQNVEYYKNKVLKEISK.

The J domain occupies 5–68 (DYYEILGVSK…KKRAQYDQFG (64 aa)). Residues 135 to 217 (GISKNINYDR…CYGKKVINER (83 aa)) form a CR-type zinc finger. The Zn(2+) site is built by C148, C151, C165, C168, C191, C194, C205, and C208. CXXCXGXG motif repeat units follow at residues 148–155 (CHKCQGTG), 165–172 (CTKCHGRG), 191–198 (CHECEGTG), and 205–212 (CEQCYGKK).

This sequence belongs to the DnaJ family. As to quaternary structure, homodimer. Zn(2+) serves as cofactor.

Its subcellular location is the cytoplasm. Participates actively in the response to hyperosmotic and heat shock by preventing the aggregation of stress-denatured proteins and by disaggregating proteins, also in an autonomous, DnaK-independent fashion. Unfolded proteins bind initially to DnaJ; upon interaction with the DnaJ-bound protein, DnaK hydrolyzes its bound ATP, resulting in the formation of a stable complex. GrpE releases ADP from DnaK; ATP binding to DnaK triggers the release of the substrate protein, thus completing the reaction cycle. Several rounds of ATP-dependent interactions between DnaJ, DnaK and GrpE are required for fully efficient folding. Also involved, together with DnaK and GrpE, in the DNA replication of plasmids through activation of initiation proteins. This is Chaperone protein DnaJ from Ureaplasma parvum serovar 3 (strain ATCC 700970).